The primary structure comprises 174 residues: Protein C2-DOMAIN ABA-RELATED 2 (174 aa).

An N-acetylmethionine modification is found at methionine 1. The C2 domain occupies 1–104 (MENMLGLLRL…EAIRIQNQLG (104 aa)). The Ca(2+) site is built by arginine 21, aspartate 22, aspartate 27, aspartate 73, arginine 74, aspartate 75, and aspartate 81.

Belongs to the plant CAR protein family. As to quaternary structure, binds to PYR/PYL/RCAR abscisic acid intracellular receptors in an ABA-independent manner, both at the plasma membrane and in the nucleus. The cofactor is Ca(2+).

It localises to the cell membrane. The protein resides in the nucleus. Stimulates the GTPase/ATPase activities of Obg-like ATPases. Mediates the transient calcium-dependent interaction of PYR/PYL/RCAR abscisic acid (ABA) receptors with the plasma membrane and thus regulates ABA sensitivity. The protein is Protein C2-DOMAIN ABA-RELATED 2 of Arabidopsis thaliana (Mouse-ear cress).